Reading from the N-terminus, the 234-residue chain is HTH-type transcriptional regulator SmoD (234 aa).

The HTH gntR-type domain maps to 8-76 (LPMYMQIAEM…QGSGNYIRAV (69 aa)). Positions 36–55 (ERDMAADLGIAVGTLRKSLA) form a DNA-binding region, H-T-H motif.

The protein localises to the cytoplasm. In terms of biological role, probably regulates expression of genes involved in the sulfoquinovose monooxygenase (sulfo-SMO) pathway (smoABCDEFGHI). In Agrobacterium fabrum (strain C58 / ATCC 33970) (Agrobacterium tumefaciens (strain C58)), this protein is HTH-type transcriptional regulator SmoD.